A 170-amino-acid chain; its full sequence is Crossover junction endodeoxyribonuclease RuvC (170 aa).

Active-site residues include D8, E67, and D139. Positions 8, 67, and 139 each coordinate Mg(2+).

Belongs to the RuvC family. Homodimer which binds Holliday junction (HJ) DNA. The HJ becomes 2-fold symmetrical on binding to RuvC with unstacked arms; it has a different conformation from HJ DNA in complex with RuvA. In the full resolvosome a probable DNA-RuvA(4)-RuvB(12)-RuvC(2) complex forms which resolves the HJ. It depends on Mg(2+) as a cofactor.

The protein resides in the cytoplasm. It catalyses the reaction Endonucleolytic cleavage at a junction such as a reciprocal single-stranded crossover between two homologous DNA duplexes (Holliday junction).. In terms of biological role, the RuvA-RuvB-RuvC complex processes Holliday junction (HJ) DNA during genetic recombination and DNA repair. Endonuclease that resolves HJ intermediates. Cleaves cruciform DNA by making single-stranded nicks across the HJ at symmetrical positions within the homologous arms, yielding a 5'-phosphate and a 3'-hydroxyl group; requires a central core of homology in the junction. The consensus cleavage sequence is 5'-(A/T)TT(C/G)-3'. Cleavage occurs on the 3'-side of the TT dinucleotide at the point of strand exchange. HJ branch migration catalyzed by RuvA-RuvB allows RuvC to scan DNA until it finds its consensus sequence, where it cleaves and resolves the cruciform DNA. This Pectobacterium atrosepticum (strain SCRI 1043 / ATCC BAA-672) (Erwinia carotovora subsp. atroseptica) protein is Crossover junction endodeoxyribonuclease RuvC.